Here is a 232-residue protein sequence, read N- to C-terminus: MPGWFKKAWYGLASLLSFSSFILIIVALVVPHWLSGKILCQTGVDLVNATDRELVKFIGDIYYGLFRGCKVRQCGLGGRQSQFTIFPHLVKELNAGLHVMILLLLFLALALALVSMGFAILNMIQVPYRAVSGPGGICLWNVLAGGVVALAIASFVAAVKFHDLTERIANFQEKLFQFVVVEEQYEESFWICVASASAHAANLVVVAISQIPLPEIKTKIEEATVTAEDILY.

The helical transmembrane segment at 10 to 30 (YGLASLLSFSSFILIIVALVV) threads the bilayer. N-linked (GlcNAc...) asparagine glycosylation occurs at asparagine 48. The next 3 helical transmembrane spans lie at 101–121 (ILLLLFLALALALVSMGFAIL), 139–159 (LWNVLAGGVVALAIASFVAAV), and 188–208 (SFWICVASASAHAANLVVVAI).

It belongs to the clarin family.

It localises to the cell projection. The protein localises to the stereocilium membrane. Its function is as follows. Plays a key role to hearing function. Required for normal organization and maintenance of the stereocilia bundle and for mechano-electrical transduction. The protein is Clarin-2 of Homo sapiens (Human).